The primary structure comprises 478 residues: Cytochrome c-552 (478 aa).

Residues Met1–Ala27 form the signal peptide. His91 contributes to the heme c binding site. 3 residues coordinate heme: Cys119, Cys122, and Lys123. Residues Cys157, Cys160, His161, Cys206, Cys209, and His210 each contribute to the heme c site. Positions 212, 213, 258, and 260 each coordinate Ca(2+). Position 213 (Tyr213) interacts with substrate. His261 lines the substrate pocket. His272, Cys279, Cys282, His283, His298, Cys311, Cys314, His315, and His390 together coordinate heme c.

This sequence belongs to the cytochrome c-552 family. Ca(2+) serves as cofactor. It depends on heme c as a cofactor.

It is found in the periplasm. It catalyses the reaction 6 Fe(III)-[cytochrome c] + NH4(+) + 2 H2O = 6 Fe(II)-[cytochrome c] + nitrite + 8 H(+). It functions in the pathway nitrogen metabolism; nitrate reduction (assimilation). Catalyzes the reduction of nitrite to ammonia, consuming six electrons in the process. This Aliivibrio fischeri (strain ATCC 700601 / ES114) (Vibrio fischeri) protein is Cytochrome c-552.